The following is a 132-amino-acid chain: Small ribosomal subunit protein uS8 (132 aa).

The protein belongs to the universal ribosomal protein uS8 family. As to quaternary structure, part of the 30S ribosomal subunit. Contacts proteins S5 and S12.

One of the primary rRNA binding proteins, it binds directly to 16S rRNA central domain where it helps coordinate assembly of the platform of the 30S subunit. The protein is Small ribosomal subunit protein uS8 of Francisella philomiragia subsp. philomiragia (strain ATCC 25017 / CCUG 19701 / FSC 153 / O#319-036).